Consider the following 77-residue polypeptide: Acyl carrier protein (77 aa).

Residues 1–76 (MAVFEDVRDV…DVVNYIEKLG (76 aa)) form the Carrier domain. Ser-36 is modified (O-(pantetheine 4'-phosphoryl)serine).

Belongs to the acyl carrier protein (ACP) family. In terms of processing, 4'-phosphopantetheine is transferred from CoA to a specific serine of apo-ACP by AcpS. This modification is essential for activity because fatty acids are bound in thioester linkage to the sulfhydryl of the prosthetic group.

It localises to the cytoplasm. It functions in the pathway lipid metabolism; fatty acid biosynthesis. In terms of biological role, carrier of the growing fatty acid chain in fatty acid biosynthesis. The chain is Acyl carrier protein from Campylobacter concisus (strain 13826).